The following is a 329-amino-acid chain: GTPase Obg (329 aa).

One can recognise an Obg domain in the interval 1–159 (MQFIDQARIS…WPLQLELKLL (159 aa)). The region spanning 160–328 (AEVGIIGLPN…MLDRVWSELG (169 aa)) is the OBG-type G domain. ATP is bound by residues 166-173 (GLPNAGKS), 191-195 (FTTLI), 213-216 (DIPG), 280-283 (NKQE), and 309-311 (SAA). Positions 173 and 193 each coordinate Mg(2+).

It belongs to the TRAFAC class OBG-HflX-like GTPase superfamily. OBG GTPase family. As to quaternary structure, monomer. Requires Mg(2+) as cofactor.

The protein localises to the cytoplasm. An essential GTPase which binds GTP, GDP and possibly (p)ppGpp with moderate affinity, with high nucleotide exchange rates and a fairly low GTP hydrolysis rate. Plays a role in control of the cell cycle, stress response, ribosome biogenesis and in those bacteria that undergo differentiation, in morphogenesis control. In Synechococcus sp. (strain CC9311), this protein is GTPase Obg.